The chain runs to 363 residues: Chorismate synthase (363 aa).

Position 47 (arginine 47) interacts with NADP(+). FMN is bound by residues 124–126, glycine 285, 300–304, and arginine 326; these read RSS and KPTAT.

Belongs to the chorismate synthase family. In terms of assembly, homotetramer. FMNH2 serves as cofactor.

The enzyme catalyses 5-O-(1-carboxyvinyl)-3-phosphoshikimate = chorismate + phosphate. Its pathway is metabolic intermediate biosynthesis; chorismate biosynthesis; chorismate from D-erythrose 4-phosphate and phosphoenolpyruvate: step 7/7. Functionally, catalyzes the anti-1,4-elimination of the C-3 phosphate and the C-6 proR hydrogen from 5-enolpyruvylshikimate-3-phosphate (EPSP) to yield chorismate, which is the branch point compound that serves as the starting substrate for the three terminal pathways of aromatic amino acid biosynthesis. This reaction introduces a second double bond into the aromatic ring system. In Opitutus terrae (strain DSM 11246 / JCM 15787 / PB90-1), this protein is Chorismate synthase.